The primary structure comprises 400 residues: Multiphosphoryl transfer protein (400 aa).

In terms of domain architecture, PTS EIIA type-2 spans 2–142 (LELTTQDIQL…QQIIAIIKGE (141 aa)). The active-site Tele-phosphohistidine intermediate; for EIIA activity is H62. Residue H62 is modified to Phosphohistidine; by HPr. An HPr domain is found at 310–400 (AHTATFRIKN…VAINAGLGEG (91 aa)). H324 (pros-phosphohistidine intermediate; for HPr activity) is an active-site residue. H324 is modified (phosphohistidine; by EI).

It localises to the cytoplasm. In terms of biological role, the phosphoenolpyruvate-dependent sugar phosphotransferase system (sugar PTS), a major carbohydrate active transport system, catalyzes the phosphorylation of incoming sugar substrates concomitantly with their translocation across the cell membrane. The enzyme II FruAB PTS system is involved in fructose transport. This Vibrio cholerae serotype O1 (strain ATCC 39315 / El Tor Inaba N16961) protein is Multiphosphoryl transfer protein.